A 189-amino-acid polypeptide reads, in one-letter code: UPF0149 protein VFMJ11_2207 (189 aa).

It belongs to the UPF0149 family.

This Aliivibrio fischeri (strain MJ11) (Vibrio fischeri) protein is UPF0149 protein VFMJ11_2207.